A 649-amino-acid chain; its full sequence is MKNRSPSPPLHVHVDESTPVHVHIKKSSRPPAKTQQGAKLKKKGMGNLRRSATVKTKVPWIPPGKSSLRDAGLKWEGLTHRLDITPPDTERMFSALRMSDLSTDEEEMKRSKMNSYEEKIATLMSEMGTLKHELELQKREKYLGKCEEQLAASKRLLEAQQEELAEVSQELVETENENVWLKRSLDRIQEEKGLSILQKQQLQEEKAHLLAKLLEAETDGAEAAKQVTLLSDTIQRLKHEKRMTSTDINLLTRQKELLLQKLNTFEDTNRSLRTLLREQHRQETETYRLMEQKEMLLKKLSDADTEKMHLQLKLHEQEEKVEDLLAQLKTEKDLSKTASEVSKSIESTKAHLQGQLRTREAENNRLSVQIRNLERNEAHQKEEIVKLMEQLTELKQKVDSEKEALKKSVRAQKQRAERSEETLEMLNRQLVGNDSELAKALSSAETWRSRYNKLMKESSQHEEEVAVLSNRLKGLLGESHGIEERGRLERDSLLEKLHQQTTENTCLRLEHEKLKASLTTVEEKLSLAQSEVQQLKNSLRQYEGLVDTYKEQLQKSRQEANSISLQLEMSEKENKNIKEDMNLELEQMRRKFQNRLSELEHLPEILKSTELDLQECHQQLRSYEQKSSELSSTISDLRTRVRNWRNCAL.

The tract at residues 1–65 (MKNRSPSPPL…TKVPWIPPGK (65 aa)) is disordered. Coiled coils occupy residues 137 to 219 (QKRE…AETD), 247 to 426 (DINL…LEML), and 464 to 649 (EVAV…NCAL). The segment at 339-358 (SEVSKSIESTKAHLQGQLRT) is disordered.

It belongs to the ODF2 family. In terms of assembly, self-associates. Associates with microtubules and forms a fibrillar structure partially linked to the microtubule network.

It localises to the cytoplasm. The protein resides in the cytoskeleton. The protein localises to the microtubule organizing center. It is found in the centrosome. Its subcellular location is the cell projection. It localises to the cilium. The protein resides in the centriole. The protein localises to the spindle pole. It is found in the flagellum. Its function is as follows. Seems to be a major form of sperm tail outer dense fibers. The sequence is that of Outer dense fiber protein 2 (odf2) from Xenopus laevis (African clawed frog).